The chain runs to 593 residues: Trehalose synthase/amylase TreS (593 aa).

A substrate-binding site is contributed by Asp-90. Asn-132 contributes to the Ca(2+) binding site. 2 residues coordinate substrate: His-133 and Gln-198. Position 200 (Asp-200) interacts with Ca(2+). Position 228 (Arg-228) interacts with substrate. Catalysis depends on Asp-230, which acts as the Nucleophile. Residues Tyr-234, Leu-235, and Glu-237 each contribute to the Ca(2+) site. The Proton donor role is filled by Glu-272. 2 residues coordinate substrate: His-341 and Asp-342.

The protein belongs to the glycosyl hydrolase 13 family. TreS subfamily. Homohexamer.

It carries out the reaction D-maltose = alpha,alpha-trehalose. The catalysed reaction is Endohydrolysis of (1-&gt;4)-alpha-D-glucosidic linkages in polysaccharides containing three or more (1-&gt;4)-alpha-linked D-glucose units.. The protein operates within glycan biosynthesis; glycogen biosynthesis. The amylase activity is stimulated by addition of Ca(2+), but this cation and other divalent cations inhibit the trehalose synthase activity. In addition, trehalose synthase activity, but not amylase activity, is strongly inhibited, and in a competitive manner, by validoxylamine. On the other hand, amylase, but not trehalose synthase activity, is inhibited by the known transition-state amylase inhibitor, acarbose, suggesting the possibility of two different active sites. Other metal ions such as Mg(2+), Mn(2+), and Co(2+) are also somewhat effective in the stimulation of amylase activity, but Hg(2+), Cu(2+), Ni(2+) and Zn(2+) are inhibitory. Functionally, catalyzes the reversible interconversion of maltose and trehalose by transglucosylation. Maltose is the preferred substrate. To a lesser extent, also displays amylase activity, catalyzing the endohydrolysis of (1-&gt;4)-alpha-D-glucosidic linkages in glycogen and maltooligosaccharides such as maltoheptaose, to produce maltose which then can be converted to trehalose. TreS plays a key role in the utilization of trehalose for the production of glycogen and alpha-glucan via the TreS-Pep2 branch involved in the biosynthesis of maltose-1-phosphate (M1P). Might also function as a sensor and/or regulator of trehalose levels within the cell. Thus, when trehalose levels in the cell become dangerously low, TreS can expedite the conversion of glycogen to maltose via its amylase activity and then convert the maltose to trehalose; but this enzyme also can expedite or promote the conversion of trehalose to glycogen when cytoplasmic trehalose levels become too high. Is also able to catalyze the hydrolytic cleavage of alpha-aryl glucosides, as well as alpha-glucosyl fluoride in vitro. In Mycolicibacterium smegmatis (strain ATCC 700084 / mc(2)155) (Mycobacterium smegmatis), this protein is Trehalose synthase/amylase TreS.